Reading from the N-terminus, the 270-residue chain is Homeobox protein vent1B (270 aa).

2 stretches are compositionally biased toward basic and acidic residues: residues 17–26 (EEAADGKDSM) and 44–59 (YAKEMPRRKDGQDVQE). Disordered stretches follow at residues 17–66 (EEAA…SFQC) and 88–134 (TWGS…LRTA). The segment covering 89 to 99 (WGSSDEFSSAG) has biased composition (polar residues). The span at 116–131 (QDTDHNGKSTKSDRRL) shows a compositional bias: basic and acidic residues. The homeobox DNA-binding region spans 128–187 (DRRLRTAFSPQQISKLEQAFNKQRYLGASERKKLATSLMLSEIQVKTWFQNRRMKLKRQI).

As to expression, expressed in the ventral marginal zone of gastrulae. At the end of gastrulation, predominantly localized to the ventral region of the closing slit blastopore. At early tail bud stage, expression is maintained only in the forming proctodeum.

It is found in the nucleus. Functionally, probable transcription regulator. Acts in a ventral signaling pathway downstream of bmp4 and vent2B. The protein is Homeobox protein vent1B (vent1B) of Xenopus laevis (African clawed frog).